The sequence spans 432 residues: Short/branched chain specific acyl-CoA dehydrogenase, mitochondrial (432 aa).

The N-terminal 33 residues, 1–33, are a transit peptide targeting the mitochondrion; sequence MERATVRLLRGGALLRRNFPSCLSSWKTPPHAL. Lys-70 is subject to N6-acetyllysine; alternate. N6-succinyllysine; alternate is present on Lys-70. FAD-binding positions include 174 to 183 and 207 to 209; these read ICISETGAGS and WIS. Substrate is bound at residue Ser-183. At Ser-183 the chain carries Phosphoserine. Residues Tyr-229 and Tyr-283 each coordinate substrate. The residue at position 284 (Lys-284) is an N6-acetyllysine; alternate. Position 284 is an N6-succinyllysine; alternate (Lys-284). 291-294 serves as a coordination point for substrate; that stretch reads NEGR. FAD-binding positions include Arg-319, Gln-330, and 387 to 391; that span reads EWMGG. Catalysis depends on Glu-414, which acts as the Proton acceptor. 416–418 serves as a coordination point for FAD; that stretch reads TSN. Position 426 is an N6-acetyllysine (Lys-426).

Belongs to the acyl-CoA dehydrogenase family. In terms of assembly, homotetramer. FAD is required as a cofactor.

It localises to the mitochondrion matrix. The enzyme catalyses 2-methylbutanoyl-CoA + oxidized [electron-transfer flavoprotein] + H(+) = (2E)-2-methylbut-2-enoyl-CoA + reduced [electron-transfer flavoprotein]. It carries out the reaction (2S)-2-methylbutanoyl-CoA + oxidized [electron-transfer flavoprotein] + H(+) = (2E)-2-methylbut-2-enoyl-CoA + reduced [electron-transfer flavoprotein]. The catalysed reaction is (2R)-2-methylbutanoyl-CoA + oxidized [electron-transfer flavoprotein] + H(+) = ethylacryloyl-CoA + reduced [electron-transfer flavoprotein]. It catalyses the reaction butanoyl-CoA + oxidized [electron-transfer flavoprotein] + H(+) = (2E)-butenoyl-CoA + reduced [electron-transfer flavoprotein]. The enzyme catalyses 2-methylpropanoyl-CoA + oxidized [electron-transfer flavoprotein] + H(+) = 2-methylpropenoyl-CoA + reduced [electron-transfer flavoprotein]. It carries out the reaction hexanoyl-CoA + oxidized [electron-transfer flavoprotein] + H(+) = (2E)-hexenoyl-CoA + reduced [electron-transfer flavoprotein]. The catalysed reaction is valproyl-CoA + oxidized [electron-transfer flavoprotein] + H(+) = (2E)-2-propylpent-2-enoyl-CoA + reduced [electron-transfer flavoprotein]. Its pathway is lipid metabolism; mitochondrial fatty acid beta-oxidation. The protein operates within amino-acid degradation; L-isoleucine degradation. In terms of biological role, short and branched chain specific acyl-CoA dehydrogenase that catalyzes the removal of one hydrogen from C-2 and C-3 of the fatty acyl-CoA thioester, resulting in the formation of trans-2-enoyl-CoA. Among the different mitochondrial acyl-CoA dehydrogenases, acts specifically on short and branched chain acyl-CoA derivatives such as (S)-2-methylbutyryl-CoA as well as short straight chain acyl-CoAs such as butyryl-CoA. Plays an important role in the metabolism of L-isoleucine by catalyzing the dehydrogenation of 2-methylbutyryl-CoA, one of the steps of the L-isoleucine catabolic pathway. Can also act on valproyl-CoA, a metabolite of the valproic acid drug. This chain is Short/branched chain specific acyl-CoA dehydrogenase, mitochondrial (ACADSB), found in Bos taurus (Bovine).